Reading from the N-terminus, the 362-residue chain is Phosphoserine aminotransferase (362 aa).

Position 43 (R43) interacts with L-glutamate. Pyridoxal 5'-phosphate is bound by residues 77–78 (AS), W103, T153, D173, and Q196. K197 is modified (N6-(pyridoxal phosphate)lysine). A pyridoxal 5'-phosphate-binding site is contributed by 238–239 (NT).

The protein belongs to the class-V pyridoxal-phosphate-dependent aminotransferase family. SerC subfamily. In terms of assembly, homodimer. Requires pyridoxal 5'-phosphate as cofactor.

Its subcellular location is the cytoplasm. It catalyses the reaction O-phospho-L-serine + 2-oxoglutarate = 3-phosphooxypyruvate + L-glutamate. The catalysed reaction is 4-(phosphooxy)-L-threonine + 2-oxoglutarate = (R)-3-hydroxy-2-oxo-4-phosphooxybutanoate + L-glutamate. It participates in amino-acid biosynthesis; L-serine biosynthesis; L-serine from 3-phospho-D-glycerate: step 2/3. The protein operates within cofactor biosynthesis; pyridoxine 5'-phosphate biosynthesis; pyridoxine 5'-phosphate from D-erythrose 4-phosphate: step 3/5. Functionally, catalyzes the reversible conversion of 3-phosphohydroxypyruvate to phosphoserine and of 3-hydroxy-2-oxo-4-phosphonooxybutanoate to phosphohydroxythreonine. This chain is Phosphoserine aminotransferase (serC), found in Niallia circulans (Bacillus circulans).